The chain runs to 367 residues: Anhydro-N-acetylmuramic acid kinase (367 aa).

An ATP-binding site is contributed by 11-18; it reads GTSLDGVD.

The protein belongs to the anhydro-N-acetylmuramic acid kinase family.

It carries out the reaction 1,6-anhydro-N-acetyl-beta-muramate + ATP + H2O = N-acetyl-D-muramate 6-phosphate + ADP + H(+). It participates in amino-sugar metabolism; 1,6-anhydro-N-acetylmuramate degradation. The protein operates within cell wall biogenesis; peptidoglycan recycling. Catalyzes the specific phosphorylation of 1,6-anhydro-N-acetylmuramic acid (anhMurNAc) with the simultaneous cleavage of the 1,6-anhydro ring, generating MurNAc-6-P. Is required for the utilization of anhMurNAc either imported from the medium or derived from its own cell wall murein, and thus plays a role in cell wall recycling. This Rhodopseudomonas palustris (strain HaA2) protein is Anhydro-N-acetylmuramic acid kinase.